The primary structure comprises 252 residues: 3-deoxy-manno-octulosonate cytidylyltransferase (252 aa).

Belongs to the KdsB family.

It localises to the cytoplasm. The catalysed reaction is 3-deoxy-alpha-D-manno-oct-2-ulosonate + CTP = CMP-3-deoxy-beta-D-manno-octulosonate + diphosphate. It participates in nucleotide-sugar biosynthesis; CMP-3-deoxy-D-manno-octulosonate biosynthesis; CMP-3-deoxy-D-manno-octulosonate from 3-deoxy-D-manno-octulosonate and CTP: step 1/1. The protein operates within bacterial outer membrane biogenesis; lipopolysaccharide biosynthesis. Its function is as follows. Activates KDO (a required 8-carbon sugar) for incorporation into bacterial lipopolysaccharide in Gram-negative bacteria. This is 3-deoxy-manno-octulosonate cytidylyltransferase from Trichlorobacter lovleyi (strain ATCC BAA-1151 / DSM 17278 / SZ) (Geobacter lovleyi).